A 244-amino-acid chain; its full sequence is Protein-lysine methyltransferase METTL21E (244 aa).

Residues 1-20 form a disordered region; that stretch reads MDLTVTHITHKETYKEPRDD. Positions 9-18 are enriched in basic and acidic residues; the sequence is THKETYKEPR. S-adenosyl-L-methionine is bound by residues Trp69, 97 to 99, Asp118, Trp149, and Ala170; that span reads GAG.

It belongs to the methyltransferase superfamily. METTL21 family.

Its function is as follows. Protein-lysine methyltransferase. The protein is Protein-lysine methyltransferase METTL21E (Mettl21e) of Mus musculus (Mouse).